The chain runs to 279 residues: Large ribosomal subunit protein uL2 (279 aa).

The tract at residues 222–264 (GVAMNPVDHPHGGGEGRTSGGRNPVTPAGKPTKGAKTRVNKAT) is disordered.

Belongs to the universal ribosomal protein uL2 family. Part of the 50S ribosomal subunit. Forms a bridge to the 30S subunit in the 70S ribosome.

Its function is as follows. One of the primary rRNA binding proteins. Required for association of the 30S and 50S subunits to form the 70S ribosome, for tRNA binding and peptide bond formation. It has been suggested to have peptidyltransferase activity; this is somewhat controversial. Makes several contacts with the 16S rRNA in the 70S ribosome. In Caulobacter sp. (strain K31), this protein is Large ribosomal subunit protein uL2.